A 677-amino-acid chain; its full sequence is Protein asunder (677 aa).

The stretch at 515-540 (RLKLSKAKDQYRLLYRELEQLIQLNS) forms a coiled coil. Positions 578–598 (ESPLSPERLEPTSSSSSNSLL) are enriched in low complexity. Residues 578-604 (ESPLSPERLEPTSSSSSNSLLKARKRR) are disordered. The Nuclear localization signal (NLS) signature appears at 598 to 604 (LKARKRR).

It belongs to the Integrator subunit 13 family. Belongs to the multiprotein complex Integrator, at least composed of IntS1, IntS2, IntS3, IntS4, omd/IntS5, IntS6, defl/IntS7, IntS8, IntS9, IntS10, IntS11, IntS12, asun/IntS13, IntS14 and IntS15. The core complex associates with protein phosphatase 2A subunits mts/PP2A and Pp2A-29B, to form the Integrator-PP2A (INTAC) complex. In terms of processing, phosphorylated.

The protein localises to the nucleus. It localises to the cytoplasm. The protein resides in the perinuclear region. Component of the integrator complex, a multiprotein complex that terminates RNA polymerase II (Pol II) transcription in the promoter-proximal region of genes. The integrator complex provides a quality checkpoint during transcription elongation by driving premature transcription termination of transcripts that are unfavorably configured for transcriptional elongation: the complex terminates transcription by (1) catalyzing dephosphorylation of the C-terminal domain (CTD) of Pol II subunit Polr2A/Rbp1 and Spt5, and (2) degrading the exiting nascent RNA transcript via endonuclease activity. The integrator complex is also involved in the 3'-end processing of the U7 snRNA, and also the spliceosomal snRNAs U1, U2, U4 and U5. In Drosophila willistoni (Fruit fly), this protein is Protein asunder (asun).